The following is a 349-amino-acid chain: UPF0324 inner membrane protein YeiH (349 aa).

Topologically, residues 1-12 (MTNITLQKQHRT) are periplasmic. A helical membrane pass occupies residues 13–32 (LWHFIPGLALSAVITGVALW). The Cytoplasmic portion of the chain corresponds to 33 to 35 (GGS). A helical membrane pass occupies residues 36–58 (IPAVAGAGFSALTLAILLGMVLG). At 59–99 (NTIYPHIWKSCDGGVLFAKQYLLRLGIILYGFRLTFSQIAD) the chain is on the periplasmic side. The helical transmembrane segment at 100-122 (VGISGIIIDVLTLSSTFLLACFL) threads the bilayer. At 123-131 (GQKVFGLDK) the chain is on the cytoplasmic side. The chain crosses the membrane as a helical span at residues 132 to 151 (HTSWLIGAGSSICGAAAVLA). Residues 152–162 (TEPVVKAEASK) are Periplasmic-facing. Residues 163–185 (VTVAVATVVIFGTVAIFLYPAIY) traverse the membrane as a helical segment. The Cytoplasmic portion of the chain corresponds to 186–261 (PLMSQWFSPE…SGANSGEKSK (76 aa)). The helical transmembrane segment at 262–283 (ITIPWFAILFIVVAIFNSFHLL) threads the bilayer. The Periplasmic portion of the chain corresponds to 284–289 (PQSVVN). Residues 290–312 (MLVTLDTFLLAMAMAALGLTTHV) form a helical membrane-spanning segment. At 313–321 (SALKKAGAK) the chain is on the cytoplasmic side. Residues 322-344 (PLLMALVLFAWLIVGGGAINYVI) form a helical membrane-spanning segment. The Periplasmic segment spans residues 345 to 349 (QSVIA).

It belongs to the UPF0324 family.

Its subcellular location is the cell inner membrane. This is UPF0324 inner membrane protein YeiH (yeiH) from Escherichia coli O157:H7.